Here is a 194-residue protein sequence, read N- to C-terminus: dTTP/UTP pyrophosphatase (194 aa).

The Proton acceptor role is filled by Asp73.

The protein belongs to the Maf family. YhdE subfamily. A divalent metal cation is required as a cofactor.

It is found in the cytoplasm. The catalysed reaction is dTTP + H2O = dTMP + diphosphate + H(+). It catalyses the reaction UTP + H2O = UMP + diphosphate + H(+). Functionally, nucleoside triphosphate pyrophosphatase that hydrolyzes dTTP and UTP. May have a dual role in cell division arrest and in preventing the incorporation of modified nucleotides into cellular nucleic acids. This Clostridium botulinum (strain ATCC 19397 / Type A) protein is dTTP/UTP pyrophosphatase.